We begin with the raw amino-acid sequence, 146 residues long: Late protein H7 (146 aa).

The chain crosses the membrane as a helical span at residues 10 to 32; that stretch reads LAMTAFFGELNTLDIMALIMSIF.

This sequence belongs to the chordopoxvirinae H7 family.

It is found in the membrane. Contributes to the formation of crescents and immature virions (IV). The sequence is that of Late protein H7 from Vaccinia virus (strain Tian Tan) (VACV).